Reading from the N-terminus, the 35-residue chain is Photosystem II reaction center protein T (35 aa).

A helical transmembrane segment spans residues 3–23 (ALVYTFLLVSTLGIIFFAIFF).

It belongs to the PsbT family. In terms of assembly, PSII is composed of 1 copy each of membrane proteins PsbA, PsbB, PsbC, PsbD, PsbE, PsbF, PsbH, PsbI, PsbJ, PsbK, PsbL, PsbM, PsbT, PsbY, PsbZ, Psb30/Ycf12, at least 3 peripheral proteins of the oxygen-evolving complex and a large number of cofactors. It forms dimeric complexes.

The protein resides in the plastid. Its subcellular location is the chloroplast thylakoid membrane. In terms of biological role, found at the monomer-monomer interface of the photosystem II (PS II) dimer, plays a role in assembly and dimerization of PSII. PSII is a light-driven water plastoquinone oxidoreductase, using light energy to abstract electrons from H(2)O, generating a proton gradient subsequently used for ATP formation. The chain is Photosystem II reaction center protein T from Ceratophyllum demersum (Rigid hornwort).